Reading from the N-terminus, the 157-residue chain is MKALYPGSFDPLTLGHLDLIKRGCSLFGEVVIAVLENPTKSPTFSLESRIAQIKDATKEIRGVEVCSFKGLTVEFAKRKNADLILRGLRAMSDFEYELQIAHTNRTLNQNYETVFLATEAHFSFLSSSVVKEVAAFGGEINHMVPERVATELQQKFK.

Position 8 (Ser8) interacts with substrate. Residues 8-9 (SF) and His16 contribute to the ATP site. 3 residues coordinate substrate: Lys40, Thr72, and Arg86. ATP-binding positions include 87–89 (GLR), Glu97, and 122–128 (FSFLSSS).

This sequence belongs to the bacterial CoaD family. Homohexamer. It depends on Mg(2+) as a cofactor.

The protein resides in the cytoplasm. The enzyme catalyses (R)-4'-phosphopantetheine + ATP + H(+) = 3'-dephospho-CoA + diphosphate. It participates in cofactor biosynthesis; coenzyme A biosynthesis; CoA from (R)-pantothenate: step 4/5. In terms of biological role, reversibly transfers an adenylyl group from ATP to 4'-phosphopantetheine, yielding dephospho-CoA (dPCoA) and pyrophosphate. This Prochlorococcus marinus (strain MIT 9211) protein is Phosphopantetheine adenylyltransferase.